The primary structure comprises 122 residues: Basic phospholipase A2 homolog ecarpholin S (122 aa).

Disulfide bonds link cysteine 26–cysteine 115, cysteine 28–cysteine 44, cysteine 43–cysteine 95, cysteine 49–cysteine 122, cysteine 50–cysteine 88, cysteine 57–cysteine 81, and cysteine 75–cysteine 86. Positions 105-117 (KKYTYYPNFWCKG) are important for membrane-damaging activities in eukaryotes and bacteria; heparin-binding.

Expressed by the venom gland.

It is found in the secreted. With respect to regulation, suramin inhibits the myotoxic activity. Its function is as follows. Snake venom phospholipase A2 homolog that lacks enzymatic activity. Shows high myotoxin activities and displays edema-inducing activities. The polypeptide is Basic phospholipase A2 homolog ecarpholin S (Echis carinatus (Saw-scaled viper)).